The following is a 1382-amino-acid chain: Hepatocyte growth factor receptor (1382 aa).

A signal peptide spans 1 to 24 (MKAPAVLAPGVLVLLFTLVRKSHG). Residues 25–935 (ECEEALAKSK…VQPDQNFTGL (911 aa)) lie on the Extracellular side of the membrane. The Sema domain occupies 27 to 516 (EEALAKSKMN…TGKKITKIPL (490 aa)). The N-linked (GlcNAc...) asparagine glycan is linked to Asn-45. 4 disulfide bridges follow: Cys-95–Cys-101, Cys-98–Cys-160, Cys-133–Cys-141, and Cys-173–Cys-176. A glycan (N-linked (GlcNAc...) asparagine) is linked at Asn-106. 2 N-linked (GlcNAc...) asparagine glycosylation sites follow: Asn-203 and Asn-359. Intrachain disulfides connect Cys-299-Cys-364 and Cys-386-Cys-398. 3 N-linked (GlcNAc...) asparagine glycosylation sites follow: Asn-400, Asn-406, and Asn-450. 4 disulfide bridges follow: Cys-521-Cys-539, Cys-527-Cys-562, Cys-530-Cys-546, and Cys-542-Cys-552. IPT/TIG domains are found at residues 564–656 (PTIY…FSYV), 658–740 (PVIT…FSYQ), and 743–837 (PTVY…LIYV). A glycan (O-linked (Man) threonine) is linked at Thr-583. Residues Asn-608 and Asn-636 are each glycosylated (N-linked (GlcNAc...) asparagine). An O-linked (Man) threonine glycan is attached at Thr-677. N-linked (GlcNAc...) asparagine glycosylation occurs at Asn-751. The O-linked (Man) threonine glycan is linked to Thr-762. Residues Asn-786, Asn-880, and Asn-931 are each glycosylated (N-linked (GlcNAc...) asparagine). Residues 936 to 956 (IVGVVSISIILLLLLGLFLWL) traverse the membrane as a helical segment. Topologically, residues 957 to 1382 (KKRKQIKDLG…QDSVDDEVDT (426 aa)) are cytoplasmic. Ser-967 carries the phosphoserine modification. A Phosphothreonine modification is found at Thr-978. Phosphoserine is present on residues Ser-991, Ser-998, and Ser-1001. Tyr-1004 is modified (phosphotyrosine). The Protein kinase domain maps to 1079-1346 (VHFNEVIGRG…RISAIFSTFI (268 aa)). Residues 1085–1093 (IGRGHFGCV) and Lys-1111 contribute to the ATP site. The active-site Proton acceptor is the Asp-1205. Residues 1213-1382 (LDEKFTVKVA…QDSVDDEVDT (170 aa)) form an interaction with RANBP9 region. The residue at position 1231 (Tyr-1231) is a Phosphotyrosine. Residues Tyr-1235 and Tyr-1236 each carry the phosphotyrosine; by autocatalysis modification. A Phosphothreonine modification is found at Thr-1290. Residues 1321–1360 (WHPKAEMRPSFSELVSRISAIFSTFIGEHYVHVNTTYVNV) form an interaction with MUC20 region. Tyr-1350 and Tyr-1357 each carry phosphotyrosine; by autocatalysis. The residue at position 1366 (Tyr-1366) is a Phosphotyrosine.

Belongs to the protein kinase superfamily. Tyr protein kinase family. In terms of assembly, heterodimer made of an alpha chain (50 kDa) and a beta chain (145 kDa) which are disulfide linked. Binds PLXNB1. Interacts when phosphorylated with downstream effectors including STAT3, PIK3R1, SRC, PCLG1, GRB2 and GAB1. Interacts with SPSB1, SPSB2 and SPSB4. Interacts with INPP5D/SHIP1. When phosphorylated at Tyr-1357, interacts with INPPL1/SHIP2. Interacts with RANBP9 and RANBP10, as well as SPSB1, SPSB2, SPSB3 and SPSB4. SPSB1 binding occurs in the presence and in the absence of HGF, however HGF treatment has a positive effect on this interaction. Interacts with MUC20; prevents interaction with GRB2 and suppresses hepatocyte growth factor-induced cell proliferation. Interacts with GRB10. Interacts with PTPN1 and PTPN2. Interacts with HSP90AA1 and HSP90AB1; the interaction suppresses MET kinase activity. Interacts with tensin TNS3. Interacts (when phosphorylated) with tensin TNS4 (via SH2 domain); the interaction increases MET protein stability by inhibiting MET endocytosis and subsequent lysosomal degradation. Autophosphorylated in response to ligand binding on Tyr-1235 and Tyr-1236 in the kinase domain leading to further phosphorylation of Tyr-1350 and Tyr-1357 in the C-terminal multifunctional docking site. Dephosphorylated by PTPRJ at Tyr-1350 and Tyr-1366. Dephosphorylated by PTPN1 and PTPN2. In terms of processing, ubiquitinated. Ubiquitination by CBL regulates the receptor stability and activity through proteasomal degradation. Post-translationally, O-mannosylation of IPT/TIG domains by TMEM260 is required for protein maturation. O-mannosylated residues are composed of single mannose glycans that are not elongated or modified.

The protein localises to the membrane. The enzyme catalyses L-tyrosyl-[protein] + ATP = O-phospho-L-tyrosyl-[protein] + ADP + H(+). Its activity is regulated as follows. In its inactive state, the C-terminal tail interacts with the catalytic domain and inhibits the kinase activity. Upon ligand binding, the C-terminal tail is displaced and becomes phosphorylated, thus increasing the kinase activity. Functionally, receptor tyrosine kinase that transduces signals from the extracellular matrix into the cytoplasm by binding to hepatocyte growth factor/HGF ligand. Regulates many physiological processes including proliferation, scattering, morphogenesis and survival. Ligand binding at the cell surface induces autophosphorylation of MET on its intracellular domain that provides docking sites for downstream signaling molecules. Following activation by ligand, interacts with the PI3-kinase subunit PIK3R1, PLCG1, SRC, GRB2, STAT3 or the adapter GAB1. Recruitment of these downstream effectors by MET leads to the activation of several signaling cascades including the RAS-ERK, PI3 kinase-AKT, or PLCgamma-PKC. The RAS-ERK activation is associated with the morphogenetic effects while PI3K/AKT coordinates prosurvival effects. During embryonic development, MET signaling plays a role in gastrulation, development and migration of muscles and neuronal precursors, angiogenesis and kidney formation. In adults, participates in wound healing as well as organ regeneration and tissue remodeling. Also promotes differentiation and proliferation of hematopoietic cells. The protein is Hepatocyte growth factor receptor (MET) of Loxodonta africana (African elephant).